A 605-amino-acid polypeptide reads, in one-letter code: Aspartate--tRNA(Asp/Asn) ligase (605 aa).

L-aspartate is bound at residue glutamate 172. The tract at residues 196-199 (QLFK) is aspartate. Arginine 218 lines the L-aspartate pocket. Residues 218 to 220 (RDE) and glutamine 227 each bind ATP. Residue histidine 455 coordinates L-aspartate. Glutamate 489 contacts ATP. Arginine 496 is an L-aspartate binding site. Position 541 to 544 (541 to 544 (GLDR)) interacts with ATP.

Belongs to the class-II aminoacyl-tRNA synthetase family. Type 1 subfamily. In terms of assembly, homodimer.

The protein resides in the cytoplasm. It catalyses the reaction tRNA(Asx) + L-aspartate + ATP = L-aspartyl-tRNA(Asx) + AMP + diphosphate. Its function is as follows. Aspartyl-tRNA synthetase with relaxed tRNA specificity since it is able to aspartylate not only its cognate tRNA(Asp) but also tRNA(Asn). Reaction proceeds in two steps: L-aspartate is first activated by ATP to form Asp-AMP and then transferred to the acceptor end of tRNA(Asp/Asn). This is Aspartate--tRNA(Asp/Asn) ligase from Ralstonia nicotianae (strain ATCC BAA-1114 / GMI1000) (Ralstonia solanacearum).